Reading from the N-terminus, the 370-residue chain is Peptidoglycan glycosyltransferase MrdB (370 aa).

Helical transmembrane passes span 20–40 (MLLI…SASG), 50–70 (IGQI…PPRV), 75–95 (APYL…FGAI), 136–156 (SLKN…LVAA), 160–180 (LGTS…SGLS), 183–203 (LIGV…FFLM), 263–283 (FIFA…LLAL), 312–332 (LILF…LPVV), and 336–356 (LPLV…FGIV).

It belongs to the SEDS family. MrdB/RodA subfamily.

It is found in the cell inner membrane. It catalyses the reaction [GlcNAc-(1-&gt;4)-Mur2Ac(oyl-L-Ala-gamma-D-Glu-L-Lys-D-Ala-D-Ala)](n)-di-trans,octa-cis-undecaprenyl diphosphate + beta-D-GlcNAc-(1-&gt;4)-Mur2Ac(oyl-L-Ala-gamma-D-Glu-L-Lys-D-Ala-D-Ala)-di-trans,octa-cis-undecaprenyl diphosphate = [GlcNAc-(1-&gt;4)-Mur2Ac(oyl-L-Ala-gamma-D-Glu-L-Lys-D-Ala-D-Ala)](n+1)-di-trans,octa-cis-undecaprenyl diphosphate + di-trans,octa-cis-undecaprenyl diphosphate + H(+). Its pathway is cell wall biogenesis; peptidoglycan biosynthesis. In terms of biological role, peptidoglycan polymerase that is essential for cell wall elongation. This chain is Peptidoglycan glycosyltransferase MrdB, found in Escherichia coli O157:H7.